The primary structure comprises 188 residues: Inactive cysteine S-methyltransferase OspZ (188 aa).

The protein belongs to the NleE/OspZ family.

It localises to the secreted. It is found in the host cytoplasm. The protein localises to the host nucleus. In terms of biological role, inactive effector protein: in contrast to other members of the family, does not have the ability to inhibit host cell NF-kappa-B activation. Probably lacks cysteine S-methyltransferase activity due to its inability to bind S-adenosyl-L-methionine at the C-terminus. This is Inactive cysteine S-methyltransferase OspZ from Shigella flexneri.